Reading from the N-terminus, the 37-residue chain is Large ribosomal subunit protein bL36c (37 aa).

It belongs to the bacterial ribosomal protein bL36 family.

Its subcellular location is the plastid. It is found in the chloroplast. This is Large ribosomal subunit protein bL36c (rpl36) from Nephroselmis olivacea (Green alga).